We begin with the raw amino-acid sequence, 225 residues long: NAD(P)H-quinone oxidoreductase subunit K, chloroplastic (225 aa).

[4Fe-4S] cluster is bound by residues Cys43, Cys44, Cys108, and Cys139.

It belongs to the complex I 20 kDa subunit family. NDH is composed of at least 16 different subunits, 5 of which are encoded in the nucleus. [4Fe-4S] cluster serves as cofactor.

The protein resides in the plastid. The protein localises to the chloroplast thylakoid membrane. The catalysed reaction is a plastoquinone + NADH + (n+1) H(+)(in) = a plastoquinol + NAD(+) + n H(+)(out). It catalyses the reaction a plastoquinone + NADPH + (n+1) H(+)(in) = a plastoquinol + NADP(+) + n H(+)(out). NDH shuttles electrons from NAD(P)H:plastoquinone, via FMN and iron-sulfur (Fe-S) centers, to quinones in the photosynthetic chain and possibly in a chloroplast respiratory chain. The immediate electron acceptor for the enzyme in this species is believed to be plastoquinone. Couples the redox reaction to proton translocation, and thus conserves the redox energy in a proton gradient. This is NAD(P)H-quinone oxidoreductase subunit K, chloroplastic from Arabidopsis thaliana (Mouse-ear cress).